The following is a 371-amino-acid chain: Meiotic drive suppressor wtf18 (371 aa).

The next 8 membrane-spanning stretches (helical) occupy residues Phe86 to Val106, Ala120 to Phe140, Val153 to Val173, Asp197 to Val217, Cys233 to Leu253, Leu257 to Leu277, Ala287 to Tyr307, and Phe321 to Gly341.

This sequence belongs to the WTF family. As to quaternary structure, homomer. Interacts with other proteins that exhibit high sequence similarity.

It localises to the spore membrane. The protein resides in the vacuole membrane. Acts as a suppressor component of the dual wtf meiotic drive system, and can suppress but not confer meiotic drive by compatible poisons. Wtf meiotic drive systems promote unequal transmission of alleles from the parental zygote to progeny spores by encoding a poison and an antidote from the same locus; the poison is trans-acting and forms toxic aggregates in all spores within an ascus, wherease the antidote is spore-specific and targets aggregates for degradation by the vacuole. Meiotic drive by wtf systems therefore lead to poisoning of all progeny that do not inherit the dual poison/antidote allele, or express a compatible antidote. The sequence is that of Meiotic drive suppressor wtf18 from Schizosaccharomyces kambucha (Fission yeast).